The sequence spans 134 residues: Large ribosomal subunit protein uL16c (134 aa).

The protein belongs to the universal ribosomal protein uL16 family. In terms of assembly, part of the 50S ribosomal subunit.

It is found in the plastid. It localises to the chloroplast. In Atropa belladonna (Belladonna), this protein is Large ribosomal subunit protein uL16c.